A 416-amino-acid chain; its full sequence is tRNA (guanine-N(7)-)-methyltransferase non-catalytic subunit wuho (416 aa).

The interval T47–V88 is disordered. Residues S49–A62 show a composition bias toward polar residues. 4 WD repeats span residues A89–L130, G177–S216, G220–Q258, and A317–N357.

It belongs to the WD repeat TRM82 family. In terms of assembly, forms a heterodimer with the catalytic subunit Mettl1. Interacts with mei-P26 and weakly interacts with bgcn; required for the function or formation of the mei-P26-bgcn-bam-sxl complex. Interacts with nanos; may be involved in mei-P26-dependent derepression of the BMP signaling pathway. Interacts with Myc; the interaction may be mediated by mei-P26 and may be involved in the regulation of ribosome biogenesis. As to expression, in testis, it is present at high level in hub cells, a niche for germline stem cells of testis. Ubiquitously expressed in all testicular cells throughout spermatogenesis. Ubiquitously expressed in all germline and somatic cells of the ovary.

The protein localises to the nucleus. It localises to the cytoplasm. The protein operates within tRNA modification; N(7)-methylguanine-tRNA biosynthesis. Its function is as follows. Required for the Mettl1-dependent formation of N(7)-methylguanine at position 46 (m7G46) in tRNA. In the Mettl1-wuho methyltransferase complex, it is required to stabilize and induce conformational changes of the catalytic subunit. Required for binding of nanos mRNA and repression of translation by the mei-P26-bgcn-bam-sxl complex. May cooperate with mei-P26 and nanos to derepress the BMP signaling pathway. May cooperate with mei-P26 to suppress expression of a subset of microRNAs. May cooperate with mei-P26 to regulate bam expression levels in germline cells during gametogenesis. Required to promote mitosis to meiosis transition during gametogenesis. May regulate germline cell division in part by regulating ribosome biogenesis. The protein is tRNA (guanine-N(7)-)-methyltransferase non-catalytic subunit wuho of Drosophila erecta (Fruit fly).